A 336-amino-acid chain; its full sequence is GTPase Obg (336 aa).

In terms of domain architecture, Obg spans 1-159 (MKFIDEATII…RRLQLELILL (159 aa)). The 174-residue stretch at 160-333 (ADVGLLGLPN…LCRDIMLFIN (174 aa)) folds into the OBG-type G domain. Residues 166-173 (GLPNVGKS), 191-195 (FTTLV), 213-216 (DIPG), 283-286 (NKLD), and 314-316 (SAM) each bind GTP. 2 residues coordinate Mg(2+): Ser-173 and Thr-193.

Belongs to the TRAFAC class OBG-HflX-like GTPase superfamily. OBG GTPase family. Monomer. Mg(2+) serves as cofactor.

Its subcellular location is the cytoplasm. Its function is as follows. An essential GTPase which binds GTP, GDP and possibly (p)ppGpp with moderate affinity, with high nucleotide exchange rates and a fairly low GTP hydrolysis rate. Plays a role in control of the cell cycle, stress response, ribosome biogenesis and in those bacteria that undergo differentiation, in morphogenesis control. This is GTPase Obg from Baumannia cicadellinicola subsp. Homalodisca coagulata.